The primary structure comprises 688 residues: Glycine--tRNA ligase beta subunit (688 aa).

This sequence belongs to the class-II aminoacyl-tRNA synthetase family. In terms of assembly, tetramer of two alpha and two beta subunits.

Its subcellular location is the cytoplasm. The enzyme catalyses tRNA(Gly) + glycine + ATP = glycyl-tRNA(Gly) + AMP + diphosphate. The sequence is that of Glycine--tRNA ligase beta subunit from Haemophilus influenzae (strain PittGG).